The chain runs to 152 residues: UPF0756 membrane protein Helmi_09930 (152 aa).

5 consecutive transmembrane segments (helical) span residues 6 to 26 (VLLILILLLGVIARSPMTALA), 52 to 72 (TGLIMLTLAMLAPFATGKVGL), 75 to 95 (VLLSFASLPGIIAVIGGVLAT), 111 to 131 (IIVGMIVGSLLGIVLFGGIPV), and 132 to 152 (GPLMAGGLTALILQIYGWLSK).

The protein belongs to the UPF0756 family.

Its subcellular location is the cell membrane. The chain is UPF0756 membrane protein Helmi_09930 from Heliobacterium modesticaldum (strain ATCC 51547 / Ice1).